The chain runs to 63 residues: Non-structural protein 3b (63 aa).

In Avian infectious bronchitis virus (strain UK/183/66) (IBV), this protein is Non-structural protein 3b.